The primary structure comprises 160 residues: MENQKQYPMTQEGFEKLEQELEELKTVKRPEVVEKIKVARSFGDLSENSEYDAAKDEQGFIEQDIQRIEHMIRNALIIEDSGDNNVVQIGKTVTFIEIPDGEEEVYQIVGSAEADAFNGKISNESPIAKSLIGKHLDDEVRVPLPNGAEIKVKITNIQSQ.

Residues 4–70 (QKQYPMTQEG…IEQDIQRIEH (67 aa)) adopt a coiled-coil conformation.

Belongs to the GreA/GreB family.

Necessary for efficient RNA polymerase transcription elongation past template-encoded arresting sites. The arresting sites in DNA have the property of trapping a certain fraction of elongating RNA polymerases that pass through, resulting in locked ternary complexes. Cleavage of the nascent transcript by cleavage factors such as GreA or GreB allows the resumption of elongation from the new 3'terminus. GreA releases sequences of 2 to 3 nucleotides. In Staphylococcus carnosus (strain TM300), this protein is Transcription elongation factor GreA.